A 1164-amino-acid polypeptide reads, in one-letter code: DNA-directed RNA polymerase 133 kDa polypeptide (1164 aa).

This sequence belongs to the RNA polymerase beta chain family. As to quaternary structure, the DNA-dependent RNA polymerase used for intermediate and late genes expression consists of eight subunits 147 kDa, 133 kDa, 35 kDa, 30 kDa, 22 kDa, 19 kDa, 18 kDa and 7 kDa totalling more than 500 kDa in mass. The same holoenzyme, with the addition of the transcription-specificity factor RAP94, is used for early gene expression.

It is found in the virion. The catalysed reaction is RNA(n) + a ribonucleoside 5'-triphosphate = RNA(n+1) + diphosphate. In terms of biological role, part of the DNA-dependent RNA polymerase which catalyzes the transcription of viral DNA into RNA using the four ribonucleoside triphosphates as substrates. Responsible for the transcription of early, intermediate and late genes. DNA-dependent RNA polymerase associates with the early transcription factor (ETF), itself composed of D6 and A7, thereby allowing the early genes transcription. Late transcription, and probably also intermediate transcription, require newly synthesized RNA polymerase. The chain is DNA-directed RNA polymerase 133 kDa polypeptide (RPO132) from Homo sapiens (Human).